A 1028-amino-acid chain; its full sequence is MADQNRQIKLAAAKKKLKEFQQKTIPSTGSAGPKKKRKVKGDQTDAPADRRSPENERVDVSQELEEAGAEHVSNPASAINTDNSAPQNYPADANGDEHPLENNRPLSSTESLRQLSQQLNGLLSESSTHINGDSDPPAVNEKELETRNQELSAALDSSALTNTQLTSKLETLTKQSQELSDQLQKERKEFEQKFTKEQGAMREQLQVHIQTIGILVSEKSELQTALSYTQQAARQKAAEAEDLSSRLQASKQRVSELERTLSSVSTQQKQHERHNKELEKERDSLRLEIIRFNNVSEESRQQSSELSEQLKLRVNENSALKLELEDLRKRLEMADVMLQQFSSQSGPPSEHQQLQLLLEEKHQLENHATQLMESVAQLQAERDQYAVQMQEDGRVWKDKTEQLLSQVRLMSEERDSTAAQILELQERIMELENTAAVMSTEQEPQASSQLSGPSETELALQETLRSLQEERDALSLQFQAQVRDNEQLSRLVQEQEVKLQELERQAERASEDAQDRLRILEDVQSDKATISRALTQNRELKDQLAELQNGFVKLTNENMELTSALQSEQHVKKEIARKMGQLQEDLHNAKEQLLESSSELTSVQEQRDQYLAHLQQYSAGYQQLLAEREHLQKQFLQQTQLMDRLQHDEVQGKVQLEQSHMQLQEVQEKLSRLVRDNEELKTEVQELLNGSIMNTSHRDEGDGLESQTLPESFQKSQIAIPEDFESREEMKEFIHSVLSRVEAERDEMSRRLEEERRIHQDTRQQLTALSHDHHHHHHHEPHSTCAETDGSEGVPVEVHEALRVAMEKLQERFTKLMQEKADLKERLEELEHRCIQLSGETDTIGEYIALYQNQRAIMKQKHVEKEQYINMLAKDKEEMKTKLAELQDLVMRLVGERNEWYSRYMSAVGNRDLLNSNAEQIHPAERRMEISGVDAPAVLDMSTAMDVSSSPQSSTAEIQSQSSERPAADPISSPSLRPQEDGTARQIMQLLQEIQNPQSRPAPFLGENPCIPFFYRPDEHDEVKILVV.

The disordered stretch occupies residues 1–112 (MADQNRQIKL…NRPLSSTESL (112 aa)). Over residues 40–60 (KGDQTDAPADRRSPENERVDV) the composition is skewed to basic and acidic residues. The segment covering 74–87 (NPASAINTDNSAPQ) has biased composition (polar residues). 5 coiled-coil regions span residues 162–200 (NTQLTSKLETLTKQSQELSDQLQKERKEFEQKFTKEQGA), 233–388 (ARQK…YAVQ), 414–690 (RDST…LLNG), 738–769 (LSRVEAERDEMSRRLEEERRIHQDTRQQLTAL), and 799–840 (HEAL…LSGE). The disordered stretch occupies residues 259–280 (RTLSSVSTQQKQHERHNKELEK). The segment at 756 to 791 (RRIHQDTRQQLTALSHDHHHHHHHEPHSTCAETDGS) is disordered. Positions 944–981 (AMDVSSSPQSSTAEIQSQSSERPAADPISSPSLRPQED) are disordered. A compositionally biased stretch (polar residues) spans 945–964 (MDVSSSPQSSTAEIQSQSSE).

It belongs to the GOLGA2 family.

The protein resides in the golgi apparatus. Its subcellular location is the cis-Golgi network membrane. The protein localises to the endoplasmic reticulum-Golgi intermediate compartment membrane. It localises to the cytoplasm. It is found in the cytoskeleton. The protein resides in the spindle pole. Its function is as follows. Peripheral membrane component of the cis-Golgi stack that acts as a membrane skeleton that maintains the structure of the Golgi apparatus, and as a vesicle thether that facilitates vesicle fusion to the Golgi membrane. Required for normal protein transport from the endoplasmic reticulum to the Golgi apparatus and the cell membrane. Plays a central role in mitotic Golgi disassembly. Also plays a key role in spindle pole assembly and centrosome organization. It probably promotes mitotic spindle pole assembly by activating assembly factors to nucleate microtubules around the Golgi and capture them to couple mitotic membranes to the spindle. Also required for the Golgi ribbon formation and glycosylation of membrane and secretory proteins. This chain is Golgin subfamily A member 2, found in Danio rerio (Zebrafish).